Consider the following 349-residue polypeptide: DNA polymerase IV (349 aa).

Positions 7–188 (IIHIDMDYFF…LPVKKLFGVG (182 aa)) constitute a UmuC domain. Mg(2+) is bound by residues D11 and D106. E107 is a catalytic residue.

It belongs to the DNA polymerase type-Y family. As to quaternary structure, monomer. The cofactor is Mg(2+).

It is found in the cytoplasm. It carries out the reaction DNA(n) + a 2'-deoxyribonucleoside 5'-triphosphate = DNA(n+1) + diphosphate. Poorly processive, error-prone DNA polymerase involved in untargeted mutagenesis. Copies undamaged DNA at stalled replication forks, which arise in vivo from mismatched or misaligned primer ends. These misaligned primers can be extended by PolIV. Exhibits no 3'-5' exonuclease (proofreading) activity. May be involved in translesional synthesis, in conjunction with the beta clamp from PolIII. In Francisella tularensis subsp. novicida (strain U112), this protein is DNA polymerase IV.